The primary structure comprises 704 residues: Seven transmembrane domain-containing serine/threonine-protein kinase 2 (704 aa).

Residues 1 to 5 (MPSKE) lie on the Extracellular side of the membrane. The helical transmembrane segment at 6–26 (FIIPLILLCFYSVNGFVAVIS) threads the bilayer. The Cytoplasmic segment spans residues 27 to 42 (SLVELFIHKASWNSIK). A helical transmembrane segment spans residues 43–63 (IFFYSLLILQCLCRCIIIGWG). Topologically, residues 64 to 76 (MIETVQGGEFYSN) are extracellular. Residues 77-97 (FPSLLFISYAGLVALQMIQFL) traverse the membrane as a helical segment. Residues 98–121 (PNDNQYLLLSEGKKNNHKVKVGTN) lie on the Cytoplasmic side of the membrane. The chain crosses the membrane as a helical span at residues 122 to 142 (ILIFFNLFMYFGMFLLFGIAE). The Extracellular segment spans residues 143-185 (KQVGNSTSFNHHGNHNSTTSTSTDEIPLVSTEVGELYLFGDKD). N-linked (GlcNAc...) asparagine glycosylation is found at N147 and N158. A helical membrane pass occupies residues 186-206 (PIYIVLDCFYFVCLLLLLIFH). Over 207 to 224 (SYVGWKTYKRNKDLFGIK) the chain is Cytoplasmic. Residues 225 to 245 (LNVIHLILLICIFIRSLLVII) form a helical membrane-spanning segment. Residues 246–265 (DPSSPNNSILHIDTESWLIY) lie on the Extracellular side of the membrane. The N-linked (GlcNAc...) asparagine glycan is linked to N251. A helical transmembrane segment spans residues 266-286 (IYTISYYVVGEIIPGMLLIVI). Residues 287 to 704 (EFLLPYHKRK…WSIEKDSSSK (418 aa)) are Cytoplasmic-facing. The 366-residue stretch at 317–682 (IAIHELLGMG…SLGVKFHLAN (366 aa)) folds into the Protein kinase domain. ATP contacts are provided by residues 323 to 331 (LGMGGSGAM) and K350. The Proton acceptor role is filled by D506.

The protein belongs to the protein kinase superfamily. Ser/Thr protein kinase family.

It is found in the membrane. It carries out the reaction L-seryl-[protein] + ATP = O-phospho-L-seryl-[protein] + ADP + H(+). It catalyses the reaction L-threonyl-[protein] + ATP = O-phospho-L-threonyl-[protein] + ADP + H(+). This is Seven transmembrane domain-containing serine/threonine-protein kinase 2 (7tmk2) from Dictyostelium discoideum (Social amoeba).